A 176-amino-acid polypeptide reads, in one-letter code: Probable inosine/xanthosine triphosphatase (176 aa).

Aspartate 36 contributes to the Mg(2+) binding site.

This sequence belongs to the YjjX NTPase family. Homodimer. The cofactor is Mg(2+). It depends on Mn(2+) as a cofactor.

The catalysed reaction is XTP + H2O = XDP + phosphate + H(+). It catalyses the reaction ITP + H2O = IDP + phosphate + H(+). In terms of biological role, phosphatase that hydrolyzes non-canonical purine nucleotides such as XTP and ITP to their respective diphosphate derivatives. Probably excludes non-canonical purines from DNA/RNA precursor pool, thus preventing their incorporation into DNA/RNA and avoiding chromosomal lesions. The polypeptide is Probable inosine/xanthosine triphosphatase (Saccharolobus islandicus (strain M.14.25 / Kamchatka #1) (Sulfolobus islandicus)).